Reading from the N-terminus, the 105-residue chain is Anti-sigma factor RsrA (105 aa).

4 residues coordinate Zn(2+): Cys11, His37, Cys41, and Cys44. Cys11 and Cys44 form a disulfide bridge. The interval 33 to 47 is contributes to redox-sensitivity; sequence KFEHHFEECSPCLEK. Residues 86-105 are disordered; sequence QSVPEHDVAAAPSSSAPQES. Low complexity predominate over residues 94–105; sequence AAAPSSSAPQES.

It belongs to the zinc-associated anti-sigma factor (ZAS) superfamily. Interacts with cognate sigma factor SigR under reducing but not oxiding conditions. Treatment with the thiol-oxidzing agent diamide inhibits the interaction, while incubation with thioredoxin (trxA) stimulates the interaction. It depends on Zn(2+) as a cofactor. Under oxidizing conditions up to 3 disulfide bonds are formed. A single disulfide bond inhibits binding to SigR. Cys-11 forms a disulfide bond with either Cys-44 (the major bind) or Cys-41 (a minor bond).

Functionally, a redox-regulated anti-sigma factor for extracytoplasmic function (ECF) sigma factor SigR, and a key sensor of disulfide stress. Holds SigR, its cognate ECF sigma factor, in an inactive form, inhibiting its sigma activity under reducing but not oxidizing conditions; oxidation and reduction of the anti-sigma factor is reversible. Mycothiol (MSH) is competent for reduction of RsrA, allowing it to bind to SigR. In conjunction with its cognate sigma factor SigR may sense the intracellular level of reduced MSH. Probably releases SigR during oxidative stress. The chain is Anti-sigma factor RsrA (rsrA) from Streptomyces coelicolor (strain ATCC BAA-471 / A3(2) / M145).